We begin with the raw amino-acid sequence, 407 residues long: Subtilisin-like protease CPC735_013710 (407 aa).

The signal sequence occupies residues 1–17 (MQLLNLSLFFLLPFATA). Residues 18–115 (NPIPQDSQNI…VLPDQKIYLA (98 aa)) constitute a propeptide that is removed on maturation. Residues 31–114 (QYIVTLKDGL…SVLPDQKIYL (84 aa)) enclose the Inhibitor I9 domain. The region spanning 124-407 (GWNLGYMSSK…VAYNGIQEML (284 aa)) is the Peptidase S8 domain. N-linked (GlcNAc...) asparagine glycosylation is present at Asn-145. Active-site charge relay system residues include Asp-162 and His-194. 3 N-linked (GlcNAc...) asparagine glycosylation sites follow: Asn-241, Asn-254, and Asn-341. Ser-350 (charge relay system) is an active-site residue. Residue Asn-381 is glycosylated (N-linked (GlcNAc...) asparagine).

It belongs to the peptidase S8 family.

The protein resides in the secreted. In terms of biological role, secreted subtilisin-like serine protease with keratinolytic activity that contributes to pathogenicity. This is Subtilisin-like protease CPC735_013710 from Coccidioides posadasii (strain C735) (Valley fever fungus).